A 290-amino-acid chain; its full sequence is Glutamate racemase (290 aa).

Residues 24–25 (DS) and 56–57 (YG) contribute to the substrate site. Cys-87 serves as the catalytic Proton donor/acceptor. 88-89 (NT) contacts substrate. Cys-199 acts as the Proton donor/acceptor in catalysis. Position 200-201 (200-201 (TH)) interacts with substrate. A disordered region spans residues 271-290 (GADGASLPDPPSPRIELTTT).

Belongs to the aspartate/glutamate racemases family.

The catalysed reaction is L-glutamate = D-glutamate. The protein operates within cell wall biogenesis; peptidoglycan biosynthesis. In terms of biological role, provides the (R)-glutamate required for cell wall biosynthesis. In Deinococcus radiodurans (strain ATCC 13939 / DSM 20539 / JCM 16871 / CCUG 27074 / LMG 4051 / NBRC 15346 / NCIMB 9279 / VKM B-1422 / R1), this protein is Glutamate racemase.